A 581-amino-acid chain; its full sequence is ATP-dependent lipid A-core flippase (581 aa).

The next 5 helical transmembrane spans lie at 27–47 (VFLA…FPAI), 63–83 (MVWL…VIVY), 154–174 (IALI…TLAI), 251–271 (MTPI…FLAL), and 279–299 (GASA…ISPV). Residues 28–311 (FLAVIGMVGT…LATVNPTIQR (284 aa)) enclose the ABC transmembrane type-1 domain. An ABC transporter domain is found at 343 to 579 (ICFDNVSLRY…GSYYANLSRL (237 aa)). 377 to 384 (GASGGGKS) lines the ATP pocket.

It belongs to the ABC transporter superfamily. Lipid exporter (TC 3.A.1.106) family. In terms of assembly, homodimer.

Its subcellular location is the cell inner membrane. The enzyme catalyses ATP + H2O + lipid A-core oligosaccharideSide 1 = ADP + phosphate + lipid A-core oligosaccharideSide 2.. Its function is as follows. Involved in lipopolysaccharide (LPS) biosynthesis. Translocates lipid A-core from the inner to the outer leaflet of the inner membrane. Transmembrane domains (TMD) form a pore in the inner membrane and the ATP-binding domain (NBD) is responsible for energy generation. This is ATP-dependent lipid A-core flippase from Albidiferax ferrireducens (strain ATCC BAA-621 / DSM 15236 / T118) (Rhodoferax ferrireducens).